The chain runs to 204 residues: N-alpha-acetyltransferase 40 (204 aa).

The region spanning 39–202 is the N-acetyltransferase domain; it reads EIYHHLEKGL…YYILYTKSRK (164 aa). Substrate is bound by residues Y64, 107 to 109, and Y118; that span reads TVE. Residues 120–122 and 128–133 contribute to the acetyl-CoA site; these read IQL and GRNVGK. T154 is a binding site for substrate. N159 lines the acetyl-CoA pocket. S176 is a substrate binding site.

The protein belongs to the acetyltransferase family. NAA40 subfamily.

The protein resides in the cytoplasm. Its subcellular location is the nucleus. It catalyses the reaction N-terminal L-seryl-[histone H4] + acetyl-CoA = N-terminal N(alpha)-acetyl-L-seryl-[histone H4] + CoA + H(+). The catalysed reaction is N-terminal L-seryl-[histone H2A] + acetyl-CoA = N-terminal N(alpha)-acetyl-L-seryl-[histone H2A] + CoA + H(+). Functionally, N-alpha-acetyltransferase that specifically mediates the acetylation of the N-terminal residues of histones H4 and H2A. This is N-alpha-acetyltransferase 40 from Schizosaccharomyces pombe (strain 972 / ATCC 24843) (Fission yeast).